Reading from the N-terminus, the 311-residue chain is Putative F-box protein At3g28280 (311 aa).

Residues 1 to 43 (MNSLPEDLLAMILVKLPIKIFTTFKIVCTQWESMVDSPYFRDL) enclose the F-box domain.

This is Putative F-box protein At3g28280 from Arabidopsis thaliana (Mouse-ear cress).